A 380-amino-acid polypeptide reads, in one-letter code: ATP phosphoribosyltransferase regulatory subunit (380 aa).

This sequence belongs to the class-II aminoacyl-tRNA synthetase family. HisZ subfamily. Heteromultimer composed of HisG and HisZ subunits.

Its subcellular location is the cytoplasm. It functions in the pathway amino-acid biosynthesis; L-histidine biosynthesis; L-histidine from 5-phospho-alpha-D-ribose 1-diphosphate: step 1/9. In terms of biological role, required for the first step of histidine biosynthesis. May allow the feedback regulation of ATP phosphoribosyltransferase activity by histidine. This Thermoanaerobacter sp. (strain X514) protein is ATP phosphoribosyltransferase regulatory subunit.